The following is a 478-amino-acid chain: Probable cytosol aminopeptidase (478 aa).

Mn(2+) contacts are provided by Lys244 and Asp249. Lys256 is an active-site residue. Asp267, Asp326, and Glu328 together coordinate Mn(2+). Arg330 is an active-site residue.

The protein belongs to the peptidase M17 family. Requires Mn(2+) as cofactor.

The protein localises to the cytoplasm. The enzyme catalyses Release of an N-terminal amino acid, Xaa-|-Yaa-, in which Xaa is preferably Leu, but may be other amino acids including Pro although not Arg or Lys, and Yaa may be Pro. Amino acid amides and methyl esters are also readily hydrolyzed, but rates on arylamides are exceedingly low.. It carries out the reaction Release of an N-terminal amino acid, preferentially leucine, but not glutamic or aspartic acids.. Presumably involved in the processing and regular turnover of intracellular proteins. Catalyzes the removal of unsubstituted N-terminal amino acids from various peptides. In Fusobacterium nucleatum subsp. nucleatum (strain ATCC 25586 / DSM 15643 / BCRC 10681 / CIP 101130 / JCM 8532 / KCTC 2640 / LMG 13131 / VPI 4355), this protein is Probable cytosol aminopeptidase.